The following is a 273-amino-acid chain: Epithelial sodium channel subunit beta (273 aa).

The Extracellular segment spans residues Asn1 to Asn245. 5 disulfides stabilise this stretch: Cys92-Cys179, Cys117-Cys175, Cys121-Cys171, Cys130-Cys157, and Cys132-Cys146. The helical transmembrane segment at Val246–Glu273 threads the bilayer.

Belongs to the amiloride-sensitive sodium channel (TC 1.A.6) family. SCNN1B subfamily. In terms of assembly, component of the heterotrimeric epithelial sodium channel (ENaC) composed of an alpha/SCNN1A, a beta/SCNN1B and a gamma/SCNN1G subunit.

The protein localises to the apical cell membrane. It is found in the cytoplasmic vesicle membrane. The enzyme catalyses Na(+)(in) = Na(+)(out). Originally identified and characterized by its inhibition by the diuretic drug amiloride. This is one of the three pore-forming subunits of the heterotrimeric epithelial sodium channel (ENaC), a critical regulator of sodium balance and fluid homeostasis. ENaC operates in epithelial tissues, where it mediates the electrodiffusion of sodium ions from extracellular fluid through the apical membrane of cells, with water following osmotically. It plays a key role in maintaining sodium homeostasis through electrogenic sodium reabsorption in the kidneys. Additionally, ENaC is essential for airway surface liquid homeostasis, which is crucial for proper mucus clearance. The polypeptide is Epithelial sodium channel subunit beta (Aquarana catesbeiana (American bullfrog)).